The following is a 131-amino-acid chain: CLAVATA3/ESR (CLE)-related protein ESR1 (131 aa).

The signal sequence occupies residues 1 to 26 (MASRMGMVAIVSLFVCALAASTSVNA). The interval 49–131 (RQQQQGGFIG…IGPPPLSDRY (83 aa)) is disordered. Residues proline 81 and proline 84 each carry the hydroxyproline modification. Proline 84 carries O-linked (Ara...) hydroxyproline glycosylation.

Belongs to the CLV3/ESR signal peptide family. In terms of processing, the O-glycosylation (arabinosylation) of the hydroxyproline Pro-84 enhances binding affinity of the ESR1p peptide for its receptor. In terms of tissue distribution, seed endosperm.

The protein resides in the secreted. It localises to the extracellular space. Its function is as follows. Extracellular signal peptide that regulates cell fate. This chain is CLAVATA3/ESR (CLE)-related protein ESR1, found in Zea mays (Maize).